A 1038-amino-acid polypeptide reads, in one-letter code: P3N-PIPO polyprotein (1038 aa).

One can recognise a Peptidase S30 domain in the interval leucine 170–tyrosine 313. Residues histidine 224, glutamate 233, and serine 266 each act as for P1 proteinase activity in the active site. The Involved in interaction with stylet and aphid transmission signature appears at lysine 365–cysteine 368. Residues proline 622–lysine 624 carry the Involved in virions binding and aphid transmission motif. Residues methionine 648 to glycine 770 enclose the Peptidase C6 domain. Active-site for helper component proteinase activity residues include cysteine 656 and histidine 729.

This sequence belongs to the potyviridae P3N-PIPO polyprotein family. Interacts (via PIPO domain) with host PCaP1 protein; this interaction may help to anchor the movement complex to the plasma membrane from which the complex could move to the plasmodesmata. Post-translationally, potyviral RNA is expressed as two polyproteins which undergo post-translational proteolytic processing. Genome polyprotein is processed by NIa-pro, P1 and HC-pro proteinases resulting in the production of at least ten individual proteins. P3N-PIPO is cleaved by P1 and HC-pro proteinases resulting in the production of three individual proteins. The P1 proteinase and the HC-pro cleave only their respective C-termini autocatalytically.

The protein resides in the host cell junction. The protein localises to the host plasmodesma. It carries out the reaction Hydrolyzes a Gly-|-Gly bond at its own C-terminus, commonly in the sequence -Tyr-Xaa-Val-Gly-|-Gly, in the processing of the potyviral polyprotein.. Functionally, required for aphid transmission and also has proteolytic activity. Only cleaves a Gly-Gly dipeptide at its own C-terminus. Interacts with virions and aphid stylets. Acts as a suppressor of RNA-mediated gene silencing, also known as post-transcriptional gene silencing (PTGS), a mechanism of plant viral defense that limits the accumulation of viral RNAs. May have RNA-binding activity. Its function is as follows. Allows efficient cell to cell propagation, by bypassing the host cell wall barrier. Transports viral genome to neighboring plant cells directly through plasmosdesmata, without any budding. In Beet mosaic virus (BtMV), this protein is P3N-PIPO polyprotein.